A 219-amino-acid chain; its full sequence is MNDTVLKPNLIIRHYKNLHNYASLFQEMRSYTDQRDEHSPDQLWILQHHPVLTQGQAGKPEHILIPSDLPVVQSDRGGQVTWHGPGQMVIYFMFDLNRLKWNVRTLVSFAEQLMIDLIKKYNIDAYAKADAPGVYVAERKIGSLGFKIRRGRSYHGLALNIDCDLSGFQTINPCGYAGLEMVRICDLVENYPRFDQLAQDVTAYFKEKSDFNDVQVILQ.

The region spanning 37–219 is the BPL/LPL catalytic domain; sequence EHSPDQLWIL…DFNDVQVILQ (183 aa). Residues 76-83, 143-145, and 156-158 contribute to the substrate site; these read RGGQVTWH, SLG, and GLA. The Acyl-thioester intermediate role is filled by Cys-174.

It belongs to the LipB family.

The protein resides in the cytoplasm. The enzyme catalyses octanoyl-[ACP] + L-lysyl-[protein] = N(6)-octanoyl-L-lysyl-[protein] + holo-[ACP] + H(+). It functions in the pathway protein modification; protein lipoylation via endogenous pathway; protein N(6)-(lipoyl)lysine from octanoyl-[acyl-carrier-protein]: step 1/2. Catalyzes the transfer of endogenously produced octanoic acid from octanoyl-acyl-carrier-protein onto the lipoyl domains of lipoate-dependent enzymes. Lipoyl-ACP can also act as a substrate although octanoyl-ACP is likely to be the physiological substrate. In Acinetobacter baylyi (strain ATCC 33305 / BD413 / ADP1), this protein is Octanoyltransferase.